We begin with the raw amino-acid sequence, 404 residues long: Cysteine desulfurase IscS (404 aa).

Pyridoxal 5'-phosphate-binding positions include Ala75–Thr76, Asn155, Gln183, and Ser203–His205. Lys206 is subject to N6-(pyridoxal phosphate)lysine. Thr243 serves as a coordination point for pyridoxal 5'-phosphate. Residue Cys328 is the Cysteine persulfide intermediate of the active site. Cys328 lines the [2Fe-2S] cluster pocket.

The protein belongs to the class-V pyridoxal-phosphate-dependent aminotransferase family. NifS/IscS subfamily. Homodimer. Forms a heterotetramer with IscU, interacts with other sulfur acceptors. Pyridoxal 5'-phosphate is required as a cofactor.

The protein resides in the cytoplasm. The enzyme catalyses (sulfur carrier)-H + L-cysteine = (sulfur carrier)-SH + L-alanine. It functions in the pathway cofactor biosynthesis; iron-sulfur cluster biosynthesis. Functionally, master enzyme that delivers sulfur to a number of partners involved in Fe-S cluster assembly, tRNA modification or cofactor biosynthesis. Catalyzes the removal of elemental sulfur atoms from cysteine to produce alanine. Functions as a sulfur delivery protein for Fe-S cluster synthesis onto IscU, an Fe-S scaffold assembly protein, as well as other S acceptor proteins. The sequence is that of Cysteine desulfurase IscS from Colwellia psychrerythraea (strain 34H / ATCC BAA-681) (Vibrio psychroerythus).